The chain runs to 477 residues: Cytochrome c-552 (477 aa).

The N-terminal stretch at 1–26 (MVRISTSISYLWGMVASLFLMMPAYS) is a signal peptide. His-94 contributes to the heme c binding site. Heme-binding residues include Cys-122, Cys-125, and Lys-126. Positions 160, 163, 164, 209, 212, and 213 each coordinate heme c. Ca(2+) contacts are provided by Glu-215, Tyr-216, Lys-261, and Gln-263. Residue Tyr-216 participates in substrate binding. Position 264 (His-264) interacts with substrate. 9 residues coordinate heme c: His-275, Cys-282, Cys-285, His-286, His-301, Cys-314, Cys-317, His-318, and His-393.

Belongs to the cytochrome c-552 family. It depends on Ca(2+) as a cofactor. Heme c is required as a cofactor.

The protein localises to the periplasm. It catalyses the reaction 6 Fe(III)-[cytochrome c] + NH4(+) + 2 H2O = 6 Fe(II)-[cytochrome c] + nitrite + 8 H(+). The protein operates within nitrogen metabolism; nitrate reduction (assimilation). Its function is as follows. Catalyzes the reduction of nitrite to ammonia, consuming six electrons in the process. In Pectobacterium carotovorum subsp. carotovorum (strain PC1), this protein is Cytochrome c-552.